The primary structure comprises 369 residues: Phospho-N-acetylmuramoyl-pentapeptide-transferase (369 aa).

The next 10 membrane-spanning stretches (helical) occupy residues 2–22, 54–74, 80–100, 113–133, 158–178, 195–215, 241–261, 268–288, 293–313, and 347–367; these read IAILLAVAFGITFTLFTTPFF, GLVIVVASIISYFLANFFLGL, GLLVIFMFVGMSLVGFLDDIL, FYKVVLQSFIAVPFALLTFLV, ALFSLGIIGVFSAWVLYLLWI, LDGLAAGAMIFTMLAYVVIGF, PLDMSILAAAILGSLLGFLWW, IMMGDTGALALGGAAAALSIL, LLFLVLGGLFVIEAGSVILQI, and FWIIAGLFTALGIGLFYADWL.

The protein belongs to the glycosyltransferase 4 family. MraY subfamily. Mg(2+) serves as cofactor.

The protein resides in the cell membrane. The catalysed reaction is UDP-N-acetyl-alpha-D-muramoyl-L-alanyl-gamma-D-glutamyl-meso-2,6-diaminopimeloyl-D-alanyl-D-alanine + di-trans,octa-cis-undecaprenyl phosphate = di-trans,octa-cis-undecaprenyl diphospho-N-acetyl-alpha-D-muramoyl-L-alanyl-D-glutamyl-meso-2,6-diaminopimeloyl-D-alanyl-D-alanine + UMP. Its pathway is cell wall biogenesis; peptidoglycan biosynthesis. In terms of biological role, catalyzes the initial step of the lipid cycle reactions in the biosynthesis of the cell wall peptidoglycan: transfers peptidoglycan precursor phospho-MurNAc-pentapeptide from UDP-MurNAc-pentapeptide onto the lipid carrier undecaprenyl phosphate, yielding undecaprenyl-pyrophosphoryl-MurNAc-pentapeptide, known as lipid I. This chain is Phospho-N-acetylmuramoyl-pentapeptide-transferase, found in Tropheryma whipplei (strain TW08/27) (Whipple's bacillus).